The primary structure comprises 500 residues: MTHTIKKMSLIGLILMIFTSVFGFANSPSAFYLMGYSAIPWYIFSALLFFIPFALMMAEMGSAYRKEEGGIYSWMNNSVGPRYAFIGTFMWFSSYVIWMVSTAAKIWVPFSTFVFGADMTQHWRIAGLEPTQVVGLLAVGWMILVTCVAARGINKIARITAVGGIAVMCLNLVLLLVSVAILLLNGGHFAQEINFTSSPNPGYHSGLAMLSFVVFAIFAYGGIEAVGGLVDKTEKPEKNFAKGIVFAAIVISIGYSLAIFLWGVSTNWQQILSNSAVNLGNITYILMSSLGTTLGNALNLSPEAAMTVGVWFARITGLSMFLAYTGAFFTLSYSPLKAIIQGTPKALWPAPMTTLNANGMPATAMWLQCVLVSLFILLVSFGGDTASAFYNKLTLMANVSMTLPYLFLALAFPFFKARQDLERPFVLFKTKASTLVATGVVVLVVTFANVFTIIQPVIEAGDWDSALWMIGGPIFFSLLAMAIYQNYSSRMSADPEWAAE.

The Cytoplasmic segment spans residues 1-10 (MTHTIKKMSL). A helical membrane pass occupies residues 11 to 31 (IGLILMIFTSVFGFANSPSAF). Residues 32–37 (YLMGYS) are Periplasmic-facing. The chain crosses the membrane as a helical span at residues 38 to 58 (AIPWYIFSALLFFIPFALMMA). Topologically, residues 59 to 83 (EMGSAYRKEEGGIYSWMNNSVGPRY) are cytoplasmic. The helical transmembrane segment at 84–104 (AFIGTFMWFSSYVIWMVSTAA) threads the bilayer. Residues 105–124 (KIWVPFSTFVFGADMTQHWR) lie on the Periplasmic side of the membrane. The chain crosses the membrane as a helical span at residues 125 to 145 (IAGLEPTQVVGLLAVGWMILV). The Cytoplasmic segment spans residues 146–163 (TCVAARGINKIARITAVG). Residues 164 to 184 (GIAVMCLNLVLLLVSVAILLL) traverse the membrane as a helical segment. Over 185-209 (NGGHFAQEINFTSSPNPGYHSGLAM) the chain is Periplasmic. The helical transmembrane segment at 210-230 (LSFVVFAIFAYGGIEAVGGLV) threads the bilayer. Residues 231–243 (DKTEKPEKNFAKG) are Cytoplasmic-facing. The chain crosses the membrane as a helical span at residues 244 to 264 (IVFAAIVISIGYSLAIFLWGV). At 265-308 (STNWQQILSNSAVNLGNITYILMSSLGTTLGNALNLSPEAAMTV) the chain is on the periplasmic side. The chain crosses the membrane as a helical span at residues 309-329 (GVWFARITGLSMFLAYTGAFF). At 330–361 (TLSYSPLKAIIQGTPKALWPAPMTTLNANGMP) the chain is on the cytoplasmic side. Residues 362–382 (ATAMWLQCVLVSLFILLVSFG) traverse the membrane as a helical segment. Topologically, residues 383 to 394 (GDTASAFYNKLT) are periplasmic. Residues 395–415 (LMANVSMTLPYLFLALAFPFF) form a helical membrane-spanning segment. The Cytoplasmic portion of the chain corresponds to 416–433 (KARQDLERPFVLFKTKAS). A helical membrane pass occupies residues 434–454 (TLVATGVVVLVVTFANVFTII). Topologically, residues 455-462 (QPVIEAGD) are periplasmic. A helical membrane pass occupies residues 463–483 (WDSALWMIGGPIFFSLLAMAI). Over 484–500 (YQNYSSRMSADPEWAAE) the chain is Cytoplasmic.

This sequence belongs to the amino acid-polyamine-organocation (APC) superfamily.

It localises to the cell inner membrane. The polypeptide is Inner membrane transporter YjeM (yjeM) (Salmonella typhi).